A 381-amino-acid chain; its full sequence is D-rhamnosyltransferase WbpZ (381 aa).

Residues glutamate 19, histidine 116, lysine 206, and valine 252 each contribute to the substrate site.

This sequence belongs to the glycosyltransferase group 1 family. Glycosyltransferase 4 subfamily.

It localises to the cytoplasm. The catalysed reaction is GDP-alpha-D-rhamnose + N-acetyl-alpha-D-glucosaminyl-di-trans,octa-cis-undecaprenyl diphosphate = alpha-D-rhamnosyl-(1-&gt;3)-N-acetyl-alpha-D-glucosaminyl-1-diphospho-di-trans,octa-cis-undecaprenol + GDP + H(+). It carries out the reaction GDP-alpha-D-rhamnose + N-acetyl-alpha-D-galactosaminyl-di-trans,octa-cis-undecaprenyl diphosphate = alpha-D-rhamnosyl-(1-&gt;3)-N-acetyl-alpha-D-galactosaminyl-1-diphospho-di-trans,octa-cis-undecaprenol + GDP + H(+). It catalyses the reaction N-acetyl-alpha-D-glucosaminyl-di-trans,octa-cis-undecaprenyl diphosphate + GDP-alpha-D-mannose = alpha-D-mannosyl-(1-&gt;3)-N-acetyl-alpha-D-glucosaminyl-di-trans,octa-cis-undecaprenyl diphosphate + GDP + H(+). The enzyme catalyses N-acetyl-alpha-D-galactosaminyl-di-trans,octa-cis-undecaprenyl diphosphate + GDP-alpha-D-mannose = alpha-D-mannosyl-(1-&gt;3)-N-acetyl-alpha-D-galctosaminyl-1-diphospho-di-trans,octa-cis-undecaprenol + GDP + H(+). The protein operates within lipopolysaccharide biosynthesis; LPS oligosaccharide biosynthesis. With respect to regulation, not activated by dithiothreitol (DTT) using GlcNAc-alpha-PO(3)-PO(3)-phenylundecyl (GlcNAc-PP-PhU) as acceptor substrate. 0.25% Triton X-100 and 0.125% NP-40 increases the activity 2.5-fold and 2-fold, respectively. 0.125% octyl glucoside has little effect on activity. Slightly increased activity with Mg(2+) and Pb(2+), while no effect with Mn(2+), Co(2+), Ni(2+), Cu(2+), Zn(2+), Ca(2+) or EDTA. Not inhibited by N-butyryl-galactosamine-alpha-benzyl or N-butyryl-glucosamine-beta-benzyl. Bis-imidazolium salts having aliphatic spacer groups with 4 or 6 carbons have little effect on activity, but spacer groups of 18-22 aliphatic carbons inhibit activity, with the most potent inhibitor being bis-imidazolium salt having a 20-carbon chain spacer length. Non-processive alpha-1,3-D-rhamnosyltransferase. Catalyzes the transfer of one D-rhamnose (D-Rha) residue from donor substrate GDP-D-Rha in alpha-1-3 linkage to both GlcNAc- and GalNAc-diphosphate-lipid acceptor substrates. Is also able to transfer D-mannose (D-Man) to these acceptors at a lower level. Nucleotide sugars GDP-D-Rha, GDP-Fuc, UDP-Gal, UDP-GalNAc, UDP-GlcNAc and CMP-sialic acid cannot act as donor substrates. Only compounds with a diphosphate as the aglycone group can act as acceptor substrates. No activity is detected with compounds containing a diphosphate mimic. Fluorescent undecyl-anthracenyl group-containing compounds, such as GlcNAc-PO(3)-PO(3)-AnthrU and GalNAc-PO(3)-PO(3)-AnthrU, are also good acceptor substrates. Involved in the biosynthesis of the common polysaccharide antigen (CPA), also called A band, which is one of the two major cell surface O-antigens of the P.aeruginosa lipopolysaccharide. Involved in susceptibility to antibiotic colistin. The sequence is that of D-rhamnosyltransferase WbpZ from Pseudomonas aeruginosa (strain ATCC 15692 / DSM 22644 / CIP 104116 / JCM 14847 / LMG 12228 / 1C / PRS 101 / PAO1).